An 815-amino-acid chain; its full sequence is Probable oligoxyloglucan-reducing end-specific xyloglucanase (815 aa).

A signal peptide spans 1–19 (MKFWLQQLGLAVLCASSAA). The Nucleophile role is filled by aspartate 58. Asparagine 113 carries N-linked (GlcNAc...) asparagine glycosylation. A BNR 1 repeat occupies 118–128 (FVSNDRGATFT). N-linked (GlcNAc...) asparagine glycosylation is present at asparagine 180. The BNR 2 repeat unit spans residues 218-228 (YYTTDGGKNWE). Asparagine 246, asparagine 290, and asparagine 304 each carry an N-linked (GlcNAc...) asparagine glycan. Residues 351–361 (YLSRDGGKTWK) form a BNR 3 repeat. N-linked (GlcNAc...) asparagine glycosylation is present at asparagine 387. Residue aspartate 489 is the Proton donor of the active site. Residues 545 to 555 (YSTDGGSEWTK) form a BNR 4 repeat. 2 N-linked (GlcNAc...) asparagine glycosylation sites follow: asparagine 564 and asparagine 603. Residues 649 to 658 (YVSTDGGLSY) form a BNR 5 repeat. N-linked (GlcNAc...) asparagine glycosylation is present at asparagine 662. BNR repeat units follow at residues 696–706 (YHTTDFGKRWK) and 749–759 (YRSDDNGSTWD). An N-linked (GlcNAc...) asparagine glycan is attached at asparagine 754.

Belongs to the glycosyl hydrolase 74 family.

Its subcellular location is the secreted. The enzyme catalyses Hydrolysis of cellobiose from the reducing end of xyloglucans consisting of a beta-(1-&gt;4)-linked glucan carrying alpha-D-xylosyl groups on O-6 of the glucose residues. To be a substrate, the first residue must be unsubstituted, the second residue may bear a xylosyl group, whether further glycosylated or not, and the third residue, which becomes the new terminus by the action of the enzyme, is preferably xylosylated, but this xylose residue must not be further substituted.. Oligoxyloglucan-reducing end-specific xyloglucanase involved in degradation of xyloglucans. Releases the first two glycosyl segments from oligoxyloglucans. Active against cotton xyloglucan, tamarind xyloglucan and tamarind xyloglucan oligomers. The chain is Probable oligoxyloglucan-reducing end-specific xyloglucanase (xgcA) from Neosartorya fischeri (strain ATCC 1020 / DSM 3700 / CBS 544.65 / FGSC A1164 / JCM 1740 / NRRL 181 / WB 181) (Aspergillus fischerianus).